Here is a 287-residue protein sequence, read N- to C-terminus: RxLR effector protein Avr4 (287 aa).

Residues 1–24 form the signal peptide; it reads MRSLHILLVFTASLLASLTESAKA. Residues 42-55 carry the RxLR-dEER motif; the sequence is RFLRAQTDEKNEER. Residues 115-138 form a W1 motif region; sequence KYERMQWQKLKEGETLTFMRLGDR. Residues 148–171 are W2 motif; that stretch reads QLLRWVAQKKPVESVYDDLQVAGF. A W3 motif region spans residues 221-244; it reads LFEKWAMEGTHIKSVITTLKLNGK. Positions 246–267 are y motif; that stretch reads ASEMANNENFPALLKYVKLYLD.

It belongs to the RxLR effector family.

It localises to the secreted. Its subcellular location is the host cytoplasm. It is found in the host nucleus. The protein localises to the host nucleolus. The protein resides in the host cytoskeleton. Functionally, secreted effector that acts as an elicitor of hypersensitive response (HR) specifically on plants carrying defense protein R4, through its interaction with this protein. The protein is RxLR effector protein Avr4 of Phytophthora infestans (strain T30-4) (Potato late blight agent).